We begin with the raw amino-acid sequence, 340 residues long: Putative 2-hydroxyacid dehydrogenase C1773.17c (340 aa).

Residues 169–170, 249–251, and Asp275 each bind NAD(+); these read AI and TAR. The active site involves Arg251. The active site involves Glu280. The active-site Proton donor is His298. Position 298 to 301 (298 to 301) interacts with NAD(+); it reads HCGV.

This sequence belongs to the D-isomer specific 2-hydroxyacid dehydrogenase family.

In Schizosaccharomyces pombe (strain 972 / ATCC 24843) (Fission yeast), this protein is Putative 2-hydroxyacid dehydrogenase C1773.17c.